We begin with the raw amino-acid sequence, 35 residues long: Cupiennin-2e (35 aa).

A Glutamic acid 1-amide modification is found at Glu-35.

As to expression, expressed by the venom gland.

The protein resides in the secreted. The polypeptide is Cupiennin-2e (Cupiennius salei (American wandering spider)).